The chain runs to 445 residues: Ubiquitin carboxyl-terminal hydrolase 11 (445 aa).

Residues 1–412 enclose the USP domain; that stretch reads NSARADLCVA…AAYVLFYQRQ (412 aa). Residues 127 to 194 are disordered; sequence RPSSDDEDDG…GPSHWPQRAR (68 aa). S130 is subject to Phosphoserine. Over residues 131–140 the composition is skewed to acidic residues; that stretch reads DDEDDGDEKD. The active-site Nucleophile is the H362. H370 (proton acceptor) is an active-site residue. The segment at 416-445 is disordered; the sequence is RRLQPQPSSSDPPASPACGSPPNSEFMDVN. The span at 420–439 shows a compositional bias: low complexity; it reads PQPSSSDPPASPACGSPPNS. At S430 the chain carries Phosphoserine.

This sequence belongs to the peptidase C19 family. Monomer. Interacts with RANBP9/RANBPM. Interacts with BRCA2. Interacts with CHUK/IKKA. Interacts with NFKBIA. Associated component of the Polycomb group (PcG) multiprotein PRC1-like complex.

It localises to the nucleus. It is found in the cytoplasm. The protein localises to the chromosome. The enzyme catalyses Thiol-dependent hydrolysis of ester, thioester, amide, peptide and isopeptide bonds formed by the C-terminal Gly of ubiquitin (a 76-residue protein attached to proteins as an intracellular targeting signal).. In terms of biological role, protease that can remove conjugated ubiquitin from target proteins and polyubiquitin chains. Inhibits the degradation of target proteins by the proteasome. Cleaves preferentially 'Lys-6' and 'Lys-63'-linked ubiquitin chains. Has lower activity with 'Lys-11' and 'Lys-33'-linked ubiquitin chains, and extremely low activity with 'Lys-27', 'Lys-29' and 'Lys-48'-linked ubiquitin chains (in vitro). Plays a role in the regulation of pathways leading to NF-kappa-B activation. Plays a role in the regulation of DNA repair after double-stranded DNA breaks. Acts as a chromatin regulator via its association with the Polycomb group (PcG) multiprotein PRC1-like complex; may act by deubiquitinating components of the PRC1-like complex. Promotes cell proliferation by deubiquitinating phosphorylated E2F1. This is Ubiquitin carboxyl-terminal hydrolase 11 (USP11) from Canis lupus familiaris (Dog).